We begin with the raw amino-acid sequence, 184 residues long: MAAKTKTLELEDNVFLLLEGNLKRIFATPIGYTTFREFQNVVFNCANGQQEIANFFFEMLINGKLTQELAPQQKQAAHSLIAEFMMPIRVAKDIHERGEFINFITSDMLTQQERCIFLNRLARVDGQEFLLMTDVQNTCHLIRHLLARLLEAQKNPVGEKNLQEIQEEITSLKNHFDELTKALQ.

This sequence belongs to the chlamydial CPn_0803/CT_584/TC_0873 family.

The protein is Protein CPn_0803/CP_1068/CPj0803/CpB0832 of Chlamydia pneumoniae (Chlamydophila pneumoniae).